The chain runs to 255 residues: DNA repair protein RecO (255 aa).

This sequence belongs to the RecO family.

Involved in DNA repair and RecF pathway recombination. The protein is DNA repair protein RecO of Acidithiobacillus ferrooxidans (strain ATCC 23270 / DSM 14882 / CIP 104768 / NCIMB 8455) (Ferrobacillus ferrooxidans (strain ATCC 23270)).